A 510-amino-acid chain; its full sequence is MDIRAAEISAILKSQIANFGEEAAVSDVGQVLSVGDGIARIYGLDNVQAGEMLEFPKAGVKGMALNLERDNVGAVIFGQDQEIKEGDEVRRLGEIVDVPVGRGLLGRVVNPLGEPIDGKGPIQYTERRRVDVKAPGIIPRKSVHEPVQTGLKSIDTLIPVGRGQRELIIGDRQTGKTAVAIDTILNQKAVNAGKDESAKLYCVYVAIGQKRSTVAQIVKTLEEHGALEYTTVVVASASEPAPLQYLAPFAGCAMGEWFRDNGLHGLIIYDDLSKQAVAYRQMSLLLRRPPGREAYPGDVFYLHSRLLERAAKLNEDNGSGSLTALPIIETQANDVSAYIPTNVISITDGQIFLETDLFYQGIRPAVNVGISVSRVGSSAQIKAMKQVAGPIKGELAQYREMAAFAKFGSDLDASTQKMLARGERLTELLKQPQYAPLSVEEQVCVIYAGTRGYLDGIPTSSVRRFEAEFLARLHSQHADLLEGIRTKKALDKDLENTLKSALDSFSSTFA.

170 to 177 (GDRQTGKT) is a binding site for ATP.

It belongs to the ATPase alpha/beta chains family. F-type ATPases have 2 components, CF(1) - the catalytic core - and CF(0) - the membrane proton channel. CF(1) has five subunits: alpha(3), beta(3), gamma(1), delta(1), epsilon(1). CF(0) has three main subunits: a(1), b(2) and c(9-12). The alpha and beta chains form an alternating ring which encloses part of the gamma chain. CF(1) is attached to CF(0) by a central stalk formed by the gamma and epsilon chains, while a peripheral stalk is formed by the delta and b chains.

It is found in the cell inner membrane. It catalyses the reaction ATP + H2O + 4 H(+)(in) = ADP + phosphate + 5 H(+)(out). Its function is as follows. Produces ATP from ADP in the presence of a proton gradient across the membrane. The alpha chain is a regulatory subunit. The chain is ATP synthase subunit alpha from Caulobacter vibrioides (strain ATCC 19089 / CIP 103742 / CB 15) (Caulobacter crescentus).